A 249-amino-acid chain; its full sequence is Uroplakin-3b-like protein 1 (249 aa).

An N-terminal signal peptide occupies residues 1–26 (MGPHGKQSVLRMPLLLLLTCVQSGTG). At 27–194 (LESINYAPQL…PGSQGKGTVV (168 aa)) the chain is on the extracellular side. N-linked (GlcNAc...) asparagine glycosylation is found at Asn63, Asn82, and Asn133. A helical transmembrane segment spans residues 195–215 (IIAFLSILLAILLVVFLVLVI). Residues 216–249 (SACLSTSGSSPEEQVRMRHYHTHHMGSLRAERSS) lie on the Cytoplasmic side of the membrane.

It belongs to the uroplakin-3 family.

The protein localises to the membrane. The chain is Uroplakin-3b-like protein 1 from Mus musculus (Mouse).